The chain runs to 368 residues: Type 2 DNA topoisomerase 6 subunit A (368 aa).

Residues 9 to 148 (PDTEEAREQL…FHMRPEESGA (140 aa)) enclose the Topo IIA-type catalytic domain. Residue tyrosine 103 is the O-(5'-phospho-DNA)-tyrosine intermediate of the active site. Residues glutamate 201 and aspartate 253 each contribute to the Mg(2+) site.

This sequence belongs to the TOP6A family. As to quaternary structure, homodimer. Heterotetramer of two Top6A and two Top6B chains. Mg(2+) serves as cofactor.

The catalysed reaction is ATP-dependent breakage, passage and rejoining of double-stranded DNA.. Relaxes both positive and negative superturns and exhibits a strong decatenase activity. The polypeptide is Type 2 DNA topoisomerase 6 subunit A (Haloarcula marismortui (strain ATCC 43049 / DSM 3752 / JCM 8966 / VKM B-1809) (Halobacterium marismortui)).